The following is a 270-amino-acid chain: Protein-ADP-ribose hydrolase (270 aa).

One can recognise a Macro domain in the interval 73–267 (VSVKDCQKTN…LYDTYLQKEN (195 aa)). 3 residues coordinate ADP-D-ribose: aspartate 92, isoleucine 93, and asparagine 106. Positions 112, 117, and 119 each coordinate Zn(2+). Positions 119, 120, 121, 212, 213, 214, 215, and 216 each coordinate ADP-D-ribose.

The protein belongs to the MacroD-type family. Zn-Macro subfamily. Zn(2+) is required as a cofactor.

The enzyme catalyses 4-O-(ADP-D-ribosyl)-L-aspartyl-[protein] + H2O = L-aspartyl-[protein] + ADP-D-ribose + H(+). ADP-ribosylhydrolase that specifically reverses the SirTM-mediated mono-ADP-ribosylation at an asparatate residue of GcvH-L, by releasing ADP-ribose from the target protein. May play a role in the regulation of the response to host-induced oxidative stress. The protein is Protein-ADP-ribose hydrolase of Streptococcus pyogenes serotype M1.